A 316-amino-acid polypeptide reads, in one-letter code: Pantothenate kinase (316 aa).

Gly-95 to Ser-102 is a binding site for ATP.

The protein belongs to the prokaryotic pantothenate kinase family.

It is found in the cytoplasm. It carries out the reaction (R)-pantothenate + ATP = (R)-4'-phosphopantothenate + ADP + H(+). It functions in the pathway cofactor biosynthesis; coenzyme A biosynthesis; CoA from (R)-pantothenate: step 1/5. This chain is Pantothenate kinase, found in Klebsiella pneumoniae subsp. pneumoniae (strain ATCC 700721 / MGH 78578).